Consider the following 148-residue polypeptide: Ribosomal RNA large subunit methyltransferase H 2 (148 aa).

S-adenosyl-L-methionine contacts are provided by residues Leu74, Gly106, and 125–130 (FSKMTF).

This sequence belongs to the RNA methyltransferase RlmH family. As to quaternary structure, homodimer.

It is found in the cytoplasm. It carries out the reaction pseudouridine(1915) in 23S rRNA + S-adenosyl-L-methionine = N(3)-methylpseudouridine(1915) in 23S rRNA + S-adenosyl-L-homocysteine + H(+). In terms of biological role, specifically methylates the pseudouridine at position 1915 (m3Psi1915) in 23S rRNA. The chain is Ribosomal RNA large subunit methyltransferase H 2 from Caldanaerobacter subterraneus subsp. tengcongensis (strain DSM 15242 / JCM 11007 / NBRC 100824 / MB4) (Thermoanaerobacter tengcongensis).